Reading from the N-terminus, the 56-residue chain is Small ribosomal subunit protein uS14 (56 aa).

Zn(2+)-binding residues include Cys-21, Cys-24, Cys-39, and Cys-42.

It belongs to the universal ribosomal protein uS14 family. Component of the 40S small ribosomal subunit. Zn(2+) serves as cofactor.

It is found in the cytoplasm. Its subcellular location is the cytosol. The protein localises to the rough endoplasmic reticulum. This is Small ribosomal subunit protein uS14 (RpS29) from Culex quinquefasciatus (Southern house mosquito).